Here is a 145-residue protein sequence, read N- to C-terminus: Large ribosomal subunit protein uL13 (145 aa).

Belongs to the universal ribosomal protein uL13 family. Part of the 50S ribosomal subunit.

In terms of biological role, this protein is one of the early assembly proteins of the 50S ribosomal subunit, although it is not seen to bind rRNA by itself. It is important during the early stages of 50S assembly. The chain is Large ribosomal subunit protein uL13 from Bacillus velezensis (strain DSM 23117 / BGSC 10A6 / LMG 26770 / FZB42) (Bacillus amyloliquefaciens subsp. plantarum).